We begin with the raw amino-acid sequence, 930 residues long: Protocadherin gamma-A4 (930 aa).

The N-terminal stretch at 1-27 (MAAPYKSDRRGLIWICIFLGSLCDIRA) is a signal peptide. Cadherin domains follow at residues 28-132 (EQIR…APSF), 133-241 (GAQQ…APVF), 242-346 (TQPE…APEV), 347-451 (TVTS…PPTF), 452-561 (THAS…TPEI), and 569-682 (DGST…APID). Residues 28–691 (EQIRYSVPEE…DQEDSDITLY (664 aa)) lie on the Extracellular side of the membrane. N418 and N544 each carry an N-linked (GlcNAc...) asparagine glycan. A helical membrane pass occupies residues 692–712 (LVVAVAAVSCVFLAFVIVLLI). Over 713–930 (HRLRRWHSTR…KKKSGKKEKK (218 aa)) the chain is Cytoplasmic. Disordered regions lie at residues 803-839 (SSLQQAPPNTDWRFSQAQRPGTSGSQNGDETGTWPNN) and 900-930 (ATLTNAAGKRDGKAPAGGNGNKKKSGKKEKK). Over residues 920–930 (NKKKSGKKEKK) the composition is skewed to basic residues.

The protein resides in the cell membrane. Its function is as follows. Potential calcium-dependent cell-adhesion protein. May be involved in the establishment and maintenance of specific neuronal connections in the brain. The sequence is that of Protocadherin gamma-A4 from Mus musculus (Mouse).